The following is a 747-amino-acid chain: DNA damage checkpoint protein LCD1 (747 aa).

3 positions are modified to phosphoserine: Ser-10, Ser-11, and Ser-76. A coiled-coil region spans residues 62–139 (NQLVNQLNKA…MEARGKSKRE (78 aa)). Positions 145–180 (KPPSTTLSTNTNTITPDSSSVAIEAKPQSPQSKKRK) are disordered. A compositionally biased stretch (low complexity) spans 146–160 (PPSTTLSTNTNTITP).

Forms a complex with MEC1. Post-translationally, phosphorylated by MEC1 in a cell cycle dependent manner and in response to DNA damage.

Its subcellular location is the cytoplasm. It localises to the nucleus. In terms of biological role, forms a complex with the serine/threonine kinase MEC1 which activates checkpoint signaling upon genotoxic stresses. The MEC1-LCD1 complex is recruited by the single-strand-binding protein complex RPA to DNA lesions in order to initiate the DNA repair by homologous recombination, after the MRX-complex and TEL1 are displaced. Required for the recruitment of MEC1 to DNA lesions, the activation of CHK1 and RAD53 kinases and phosphorylation of RAD9 in response to DNA damage. Required for cell growth and meiotic recombination. The chain is DNA damage checkpoint protein LCD1 (LCD1) from Saccharomyces cerevisiae (strain ATCC 204508 / S288c) (Baker's yeast).